Reading from the N-terminus, the 458-residue chain is Transcription factor Atf1 (458 aa).

One can recognise a bZIP domain in the interval 347–410 (EEKRRNFLER…VNLKTLLLAH (64 aa)). The tract at residues 349–378 (KRRNFLERNRVAALKCRQRKKQWLANLQNK) is basic motif. A leucine-zipper region spans residues 389–403 (LTATVTQLREEIVNL).

Belongs to the bZIP family.

It is found in the nucleus. Its function is as follows. Transcription factor that positively regulates vegetative growth, reproduction, and osmotic stress response. In Penicillium expansum (Blue mold rot fungus), this protein is Transcription factor Atf1.